The chain runs to 244 residues: Tetraspanin-7 (244 aa).

Residues 1-11 are Cytoplasmic-facing; sequence METKPVITCLK. The chain crosses the membrane as a helical span at residues 12–35; sequence TLLIIYSFVFWITGVILLAVGVWG. The Extracellular portion of the chain corresponds to 36–51; that stretch reads KLTLGTYISLIAENST. The N-linked (GlcNAc...) asparagine glycan is linked to asparagine 49. Residues 52 to 70 traverse the membrane as a helical segment; sequence NAPYVLIGTGTTIVVFGLF. Residues 71–81 are Cytoplasmic-facing; it reads GCFATCRGSPW. The chain crosses the membrane as a helical span at residues 82 to 107; sequence MLKLYAMFLSLVFLAELVAGISGFVF. Residues 108 to 208 lie on the Extracellular side of the membrane; the sequence is RHEIKDTFLR…LVTSFMETNM (101 aa). 4 N-linked (GlcNAc...) asparagine glycosylation sites follow: asparagine 150, asparagine 153, asparagine 172, and asparagine 183. Residues 209-229 traverse the membrane as a helical segment; sequence GIIAGVAFGIAFSQLIGMLLA. The Cytoplasmic portion of the chain corresponds to 230-244; it reads CCLSRFITANQYEMV.

Belongs to the tetraspanin (TM4SF) family.

The protein resides in the membrane. Functionally, may be involved in cell proliferation and cell motility. This chain is Tetraspanin-7 (TSPAN7), found in Pongo pygmaeus (Bornean orangutan).